The primary structure comprises 131 residues: Small ribosomal subunit protein uS8 (131 aa).

It belongs to the universal ribosomal protein uS8 family. As to quaternary structure, part of the 30S ribosomal subunit. Contacts proteins S5 and S12.

Functionally, one of the primary rRNA binding proteins, it binds directly to 16S rRNA central domain where it helps coordinate assembly of the platform of the 30S subunit. This Aromatoleum aromaticum (strain DSM 19018 / LMG 30748 / EbN1) (Azoarcus sp. (strain EbN1)) protein is Small ribosomal subunit protein uS8.